Here is a 536-residue protein sequence, read N- to C-terminus: Phosphoenolpyruvate carboxykinase (ATP) (536 aa).

Substrate is bound by residues Arg-61, Tyr-195, and Lys-201. Residues Lys-201, His-220, and 236–244 (GLSGTGKTT) contribute to the ATP site. Residues Lys-201 and His-220 each coordinate Mn(2+). Asp-257 contributes to the Mn(2+) binding site. 3 residues coordinate ATP: Glu-285, Arg-322, and Thr-447. Position 322 (Arg-322) interacts with substrate.

Belongs to the phosphoenolpyruvate carboxykinase (ATP) family. Requires Mn(2+) as cofactor.

It is found in the cytoplasm. The catalysed reaction is oxaloacetate + ATP = phosphoenolpyruvate + ADP + CO2. It participates in carbohydrate biosynthesis; gluconeogenesis. In terms of biological role, involved in the gluconeogenesis. Catalyzes the conversion of oxaloacetate (OAA) to phosphoenolpyruvate (PEP) through direct phosphoryl transfer between the nucleoside triphosphate and OAA. This is Phosphoenolpyruvate carboxykinase (ATP) from Brucella anthropi (strain ATCC 49188 / DSM 6882 / CCUG 24695 / JCM 21032 / LMG 3331 / NBRC 15819 / NCTC 12168 / Alc 37) (Ochrobactrum anthropi).